The primary structure comprises 357 residues: Alanine racemase, catabolic (357 aa).

Lys33 serves as the catalytic Proton acceptor; specific for D-alanine. The residue at position 33 (Lys33) is an N6-(pyridoxal phosphate)lysine. Position 129 (Arg129) interacts with substrate. Residue Tyr253 is the Proton acceptor; specific for L-alanine of the active site. Met301 provides a ligand contact to substrate.

This sequence belongs to the alanine racemase family. The cofactor is pyridoxal 5'-phosphate.

It catalyses the reaction L-alanine = D-alanine. It functions in the pathway amino-acid biosynthesis; D-alanine biosynthesis; D-alanine from L-alanine: step 1/1. Its function is as follows. Isomerizes L-alanine to D-alanine which is then likely oxidized to pyruvate by DadA. Shows racemase activity with both alanine stereoisomers, negligible activity with D-cysteine and L-serine, and exhibits no activity with the remaining natural chiral amino acids. In Pseudomonas putida (strain ATCC 47054 / DSM 6125 / CFBP 8728 / NCIMB 11950 / KT2440), this protein is Alanine racemase, catabolic.